The primary structure comprises 274 residues: Protein FAM210A (274 aa).

The span at 51-66 (KWLHSQPKQQDSSTKT) shows a compositional bias: polar residues. Residues 51-91 (KWLHSQPKQQDSSTKTPVHDLPSGSQHQSEESSPSAKSSIS) form a disordered region. The span at 81 to 91 (ESSPSAKSSIS) shows a compositional bias: low complexity. Positions 105–217 (DQSIGLLKRF…GYLSTPPLVK (113 aa)) constitute a DUF1279 domain. A helical membrane pass occupies residues 124 to 144 (VLIPVHLVTSSFWFGSFYYAA). Residues 221–274 (QDRMEETKELFTEKMEETRDIISGKMEETKDRISEKLQETKDRVAFRKKKNEEM) are a coiled coil.

Belongs to the FAM210 family.

The protein resides in the membrane. Its subcellular location is the mitochondrion. It localises to the cytoplasm. Functionally, may play a role in the structure and strength of both muscle and bone. The protein is Protein FAM210A (fam210a) of Xenopus tropicalis (Western clawed frog).